Consider the following 457-residue polypeptide: Bifunctional F420 biosynthesis protein FbiB (457 aa).

Residues 1–253 (MTSSDSHRSA…NGPDDLFWLG (253 aa)) are coenzyme F420:L-glutamate ligase. GTP contacts are provided by residues 29-32 (LPEF), Ser-59, and Lys-64. Asp-118 serves as a coordination point for a divalent metal cation. Asn-121 serves as a coordination point for GTP. Residues Asp-159 and Thr-160 each contribute to the a divalent metal cation site. The tract at residues 254 to 457 (TTEALELGRQ…VRVADLLLRK (204 aa)) is dehydro-coenzyme F420-0 reductase. Residues 269-273 (RRSVR) and Ala-297 contribute to the FMN site. Residue Asp-329 coordinates coenzyme F420-(gamma-Glu)n. FMN is bound by residues Gly-408 and Arg-445.

In the N-terminal section; belongs to the CofE family. Mg(2+) serves as cofactor. Requires Mn(2+) as cofactor. The cofactor is K(+).

It carries out the reaction oxidized coenzyme F420-0 + GTP + L-glutamate = oxidized coenzyme F420-1 + GDP + phosphate + H(+). The catalysed reaction is oxidized coenzyme F420-1 + GTP + L-glutamate = oxidized coenzyme F420-2 + GDP + phosphate + H(+). The enzyme catalyses oxidized coenzyme F420-(gamma-L-Glu)(n) + GTP + L-glutamate = oxidized coenzyme F420-(gamma-L-Glu)(n+1) + GDP + phosphate + H(+). It catalyses the reaction oxidized coenzyme F420-0 + FMN + H(+) = dehydro coenzyme F420-0 + FMNH2. It functions in the pathway cofactor biosynthesis; coenzyme F420 biosynthesis. In terms of biological role, bifunctional enzyme that catalyzes the GTP-dependent successive addition of multiple gamma-linked L-glutamates to the L-lactyl phosphodiester of 7,8-didemethyl-8-hydroxy-5-deazariboflavin (F420-0) to form polyglutamated F420 derivatives, and the FMNH2-dependent reduction of dehydro-F420-0 to form F420-0. The polypeptide is Bifunctional F420 biosynthesis protein FbiB (Mycobacterium leprae (strain TN)).